A 458-amino-acid polypeptide reads, in one-letter code: COBRA-like protein 2 (458 aa).

The N-terminal stretch at 1 to 29 is a signal peptide; the sequence is MARFLLGAAAIALLAGVSSLLLMVPFAEA. N-linked (GlcNAc...) asparagine glycans are attached at residues asparagine 38, asparagine 163, asparagine 171, asparagine 211, asparagine 236, asparagine 318, asparagine 333, and asparagine 352. A helical membrane pass occupies residues 430-450; the sequence is VFLLMSFLVCGTLAFLHNHLV.

It belongs to the COBRA family.

Its subcellular location is the membrane. This is COBRA-like protein 2 (BC1L2) from Oryza sativa subsp. japonica (Rice).